A 199-amino-acid chain; its full sequence is Large ribosomal subunit protein mL51 (199 aa).

The N-terminal 15 residues, 1–15 (MNSASISRLTSVIRT), are a transit peptide targeting the mitochondrion.

It belongs to the mitochondrion-specific ribosomal protein mL51 family. In terms of assembly, component of the mitochondrial ribosome large subunit (39S) which comprises a 16S rRNA and about 50 distinct proteins.

It is found in the mitochondrion. The polypeptide is Large ribosomal subunit protein mL51 (mrpl-51) (Caenorhabditis briggsae).